The chain runs to 274 residues: Glutamate--cysteine ligase regulatory subunit (274 aa).

S59 is modified (phosphoserine). Position 263 is an N6-acetyllysine (K263).

This sequence belongs to the aldo/keto reductase family. Glutamate--cysteine ligase light chain subfamily. Heterodimer of a catalytic heavy chain and a regulatory light chain.

It participates in sulfur metabolism; glutathione biosynthesis; glutathione from L-cysteine and L-glutamate: step 1/2. This chain is Glutamate--cysteine ligase regulatory subunit (GCLM), found in Bos taurus (Bovine).